The sequence spans 355 residues: Probable poly-beta-1,6-N-acetyl-D-glucosamine export protein (355 aa).

10 helical membrane passes run 13-30 (AFICVIIIVTHLLTQITL), 45-67 (YIRNIFIFGTPSFIILSQLLTTL), 74-96 (INYLFSRFKYIFIPYLLIGLFYS), 116-138 (VLGQWYGYFIIIIMQFFVLSYII), 145-167 (LFNSKILLLLAFIVQQSYLHYFL), 187-204 (MILGWIFYFFLGGYIGYN), 211-233 (FLEKYLIIVIMLTLGAYVLFIAV), 243-262 (SFTYTLTLYNSVMFFLLLGV), 269-291 (MLLNTIKAISAFSFFIYLLHPII), and 306-328 (TIVFLAISLLMILGICIGVGMML).

This sequence belongs to the acyltransferase 3 family.

The protein resides in the cell membrane. In terms of biological role, presumably involved in the export of the biofilm adhesin polysaccharide poly-beta-1,6-N-acetyl-D-glucosamine (PNAG, also referred to as PIA) across the cell membrane. The chain is Probable poly-beta-1,6-N-acetyl-D-glucosamine export protein (icaC) from Staphylococcus epidermidis.